We begin with the raw amino-acid sequence, 147 residues long: Ribosome maturation factor RimP (147 aa).

Belongs to the RimP family.

It localises to the cytoplasm. In terms of biological role, required for maturation of 30S ribosomal subunits. The sequence is that of Ribosome maturation factor RimP from Sulfurihydrogenibium sp. (strain YO3AOP1).